The chain runs to 519 residues: Ribonuclease Y (519 aa).

A helical membrane pass occupies residues 3–23 (PLAILISILLSLFCLVVGYYV). A KH domain is found at 209–272 (TVSVVNLPND…ETARIALDKL (64 aa)). Residues 335 to 428 (VLKHSMEVAF…VAAADALSAA (94 aa)) enclose the HD domain.

This sequence belongs to the RNase Y family.

It is found in the cell membrane. Functionally, endoribonuclease that initiates mRNA decay. The chain is Ribonuclease Y from Bacillus licheniformis (strain ATCC 14580 / DSM 13 / JCM 2505 / CCUG 7422 / NBRC 12200 / NCIMB 9375 / NCTC 10341 / NRRL NRS-1264 / Gibson 46).